The primary structure comprises 954 residues: Alpha-xylosidase BoGH31A (954 aa).

Positions 1 to 20 are cleaved as a signal peptide; sequence MIMNMKNIFYCLLPGLLLGA. C21 carries the N-palmitoyl cysteine lipid modification. C21 is lipidated: S-diacylglycerol cysteine. The region spanning 227–366 is the PA14 domain; sequence TGQEGALTGT…NPEEQGKQSW (140 aa). Catalysis depends on residues D553 and E556. D630 (proton donor) is an active-site residue.

This sequence belongs to the glycosyl hydrolase 31 family.

The protein localises to the cell inner membrane. It catalyses the reaction Hydrolysis of terminal, non-reducing alpha-D-xylose residues with release of alpha-D-xylose.. It participates in glucan metabolism; xyloglucan degradation. Functionally, catalyzes the liberation of alpha-xylose from the non-reducing terminal glucose of xyloglucan oligosaccharides in xyloglucan degradation, converting the 'X' to 'G' units. In Bacteroides ovatus (strain ATCC 8483 / DSM 1896 / JCM 5824 / BCRC 10623 / CCUG 4943 / NCTC 11153), this protein is Alpha-xylosidase BoGH31A.